A 412-amino-acid chain; its full sequence is Major facilitator superfamily domain-containing protein 3 (412 aa).

The next 12 membrane-spanning stretches (helical) occupy residues 10 to 30 (GLYL…PVLL), 40 to 60 (VGLA…APLV), 73 to 93 (STAG…PGAG), 94 to 114 (QAGL…GAAM), 138 to 158 (VQVV…LALL), 166 to 186 (LFLL…AAPA), 209 to 229 (VLAV…KLGE), 250 to 270 (LGLW…SLGG), 291 to 311 (LGGL…GASM), 321 to 341 (ALLS…VTFT), 361 to 381 (LLAT…GGLA), and 384 to 404 (LGPH…VLYL).

The protein belongs to the major facilitator superfamily.

It is found in the membrane. The polypeptide is Major facilitator superfamily domain-containing protein 3 (MFSD3) (Homo sapiens (Human)).